The following is a 391-amino-acid chain: Ferrochelatase (391 aa).

Fe cation-binding residues include H196 and E281.

The protein belongs to the ferrochelatase family.

It is found in the cytoplasm. It catalyses the reaction heme b + 2 H(+) = protoporphyrin IX + Fe(2+). It functions in the pathway porphyrin-containing compound metabolism; protoheme biosynthesis; protoheme from protoporphyrin-IX: step 1/1. Functionally, catalyzes the ferrous insertion into protoporphyrin IX. The sequence is that of Ferrochelatase from Prochlorococcus marinus (strain NATL2A).